The primary structure comprises 99 residues: Protein dpy-30 homolog (99 aa).

Position 1 is an N-acetylmethionine (methionine 1). The tract at residues 1–26 (MESEQMLEGQTQVAENPHSEYGLTDS) is disordered. Position 19 is a phosphoserine (serine 19). Lysine 35 carries the N6-acetyllysine; alternate modification. A Glycyl lysine isopeptide (Lys-Gly) (interchain with G-Cter in SUMO2); alternate cross-link involves residue lysine 35.

This sequence belongs to the dpy-30 family. Homodimer. Core component of several methyltransferase-containing complexes including MLL1/MLL, MLL2/3 (also named ASCOM complex) and MLL4/WBP7. Each complex is at least composed of ASH2L, RBBP5, WDR5, DPY30, one or more specific histone methyltransferases (KMT2A/MLL1, KMT2D/MLL2, KMT2C/MLL3 and KMT2B/MLL4), and the facultative components MEN1, HCFC1, HCFC2, NCOA6, KDM6A, PAXIP1/PTIP, PAGR1 and alpha- and beta-tubulin PAXIP1/PTIP, PAGR1 and alpha- and beta-tubulin. Interacts with ASH2L. The interaction with ASH2L is direct. Interacts with ARFGEF1. Component of the SET1 complex, at least composed of the catalytic subunit (SETD1A or SETD1B), WDR5, WDR82, RBBP5, ASH2L/ASH2, CXXC1/CFP1, HCFC1 and DPY30.

The protein resides in the nucleus. It localises to the golgi apparatus. The protein localises to the trans-Golgi network. In terms of biological role, as part of the MLL1/MLL complex, involved in the methylation of histone H3 at 'Lys-4', particularly trimethylation. Histone H3 'Lys-4' methylation represents a specific tag for epigenetic transcriptional activation. May play some role in histone H3 acetylation. In embryonic stem (ES) cells, plays a crucial role in the differentiation potential, particularly along the neural lineage, regulating gene induction and histone H3 'Lys-4' methylation at key developmental loci, including that mediated by retinoic acid. Does not affect ES cell self-renewal. May also play an indirect or direct role in endosomal transport. This chain is Protein dpy-30 homolog (Dpy30), found in Mus musculus (Mouse).